We begin with the raw amino-acid sequence, 165 residues long: Lipoprotein signal peptidase (165 aa).

The next 4 helical transmembrane spans lie at 7–27, 46–66, 72–92, and 100–120; these read YFSS…LVLL, AVTS…FSFL, WQRY…IYLL, and LFCW…IDRV. Residues Asp127 and Asp145 contribute to the active site. Residues 136–156 traverse the membrane as a helical segment; the sequence is WHWPAFNIADSAICIGAVLFI.

This sequence belongs to the peptidase A8 family.

The protein localises to the cell inner membrane. The enzyme catalyses Release of signal peptides from bacterial membrane prolipoproteins. Hydrolyzes -Xaa-Yaa-Zaa-|-(S,diacylglyceryl)Cys-, in which Xaa is hydrophobic (preferably Leu), and Yaa (Ala or Ser) and Zaa (Gly or Ala) have small, neutral side chains.. It participates in protein modification; lipoprotein biosynthesis (signal peptide cleavage). This protein specifically catalyzes the removal of signal peptides from prolipoproteins. This Janthinobacterium sp. (strain Marseille) (Minibacterium massiliensis) protein is Lipoprotein signal peptidase.